We begin with the raw amino-acid sequence, 418 residues long: Arrestin domain-containing protein 4 (418 aa).

2 short sequence motifs (PPxY motif) span residues 350-353 (PPNY) and 395-398 (PPLY).

The protein belongs to the arrestin family. As to quaternary structure, interacts with ADRB2. Interacts (via PPxY motifs) with ITCH, NEDD4L and WWP2. Interacts with AVPR2. Identified in a complex containing at least ARRDC4, AVPR2 and HGS. Interacts with SLC11A2; controls the incorporation of SLC11A2 into extracellular vesicles through an ubiquitination-dependent mechanism. Interacts with TRIM65.

It is found in the early endosome. Its subcellular location is the cell membrane. The protein localises to the cytoplasmic vesicle. Its function is as follows. Functions as an adapter recruiting ubiquitin-protein ligases to their specific substrates. Plays a role in endocytosis of activated G protein-coupled receptors (GPCRs). Through an ubiquitination-dependent mechanism also plays a role in the incorporation of SLC11A2 into extracellular vesicles. May play a role in glucose uptake. Participates in innate immune response by promoting IFIH1/MDA5 activation through interaction with TRIM65. In Homo sapiens (Human), this protein is Arrestin domain-containing protein 4 (ARRDC4).